The chain runs to 354 residues: Probable L-ascorbate-6-phosphate lactonase UlaG (354 aa).

Belongs to the UlaG family. The cofactor is a divalent metal cation.

Its subcellular location is the cytoplasm. It carries out the reaction L-ascorbate 6-phosphate + H2O = 3-dehydro-L-gulonate 6-phosphate. Its pathway is cofactor degradation; L-ascorbate degradation; D-xylulose 5-phosphate from L-ascorbate: step 1/4. Probably catalyzes the hydrolysis of L-ascorbate-6-P into 3-keto-L-gulonate-6-P. Is essential for L-ascorbate utilization under anaerobic conditions. In Shigella boydii serotype 18 (strain CDC 3083-94 / BS512), this protein is Probable L-ascorbate-6-phosphate lactonase UlaG.